Here is a 399-residue protein sequence, read N- to C-terminus: Acetate kinase (399 aa).

N7 contributes to the Mg(2+) binding site. K14 contacts ATP. Residue R91 participates in substrate binding. The active-site Proton donor/acceptor is D148. ATP is bound by residues 208–212 (HLGNG), 283–285 (DFR), and 331–335 (GLGEN). Position 384 (E384) interacts with Mg(2+).

This sequence belongs to the acetokinase family. In terms of assembly, homodimer. It depends on Mg(2+) as a cofactor. The cofactor is Mn(2+).

Its subcellular location is the cytoplasm. The enzyme catalyses acetate + ATP = acetyl phosphate + ADP. It participates in metabolic intermediate biosynthesis; acetyl-CoA biosynthesis; acetyl-CoA from acetate: step 1/2. Catalyzes the formation of acetyl phosphate from acetate and ATP. Can also catalyze the reverse reaction. The chain is Acetate kinase from Desulfitobacterium hafniense (strain DSM 10664 / DCB-2).